The chain runs to 158 residues: S-ribosylhomocysteine lyase (158 aa).

Residues H56, H60, and C125 each coordinate Fe cation.

This sequence belongs to the LuxS family. In terms of assembly, homodimer. Requires Fe cation as cofactor.

The enzyme catalyses S-(5-deoxy-D-ribos-5-yl)-L-homocysteine = (S)-4,5-dihydroxypentane-2,3-dione + L-homocysteine. Involved in the synthesis of autoinducer 2 (AI-2) which is secreted by bacteria and is used to communicate both the cell density and the metabolic potential of the environment. The regulation of gene expression in response to changes in cell density is called quorum sensing. Catalyzes the transformation of S-ribosylhomocysteine (RHC) to homocysteine (HC) and 4,5-dihydroxy-2,3-pentadione (DPD). The sequence is that of S-ribosylhomocysteine lyase from Leuconostoc citreum (strain KM20).